The following is a 249-amino-acid chain: Small ribosomal subunit protein uS3y (249 aa).

One can recognise a KH type-2 domain in the interval 21–92 (LNEVLTRELA…SVELYAEKVN (72 aa)). Residue serine 212 is modified to Phosphoserine.

This sequence belongs to the universal ribosomal protein uS3 family.

The chain is Small ribosomal subunit protein uS3y (RPS3B) from Arabidopsis thaliana (Mouse-ear cress).